The sequence spans 355 residues: cAMP-dependent protein kinase catalytic subunit PRKX (355 aa).

Position 1 is an N-acetylmethionine (methionine 1). Residues 1–42 form a disordered region; that stretch reads MEPPAGAAATVKDPDHDPVKTKVSAPAADPKPRTSSQKAGHS. The Protein kinase domain occupies 46–300; the sequence is WDTIATVGTG…AEDIKRHRWF (255 aa). Residues 52–60 and lysine 75 contribute to the ATP site; that span reads VGTGTFGRV. Catalysis depends on aspartate 169, which acts as the Proton acceptor. A Phosphothreonine modification is found at threonine 200. One can recognise an AGC-kinase C-terminal domain in the interval 301 to 355; the sequence is RGVEWESVPQRKLKPPIVPKLSGDGDISNFETYPESELDKTPSVSDKDLETFKNF. Residues 316–355 form a disordered region; that stretch reads PIVPKLSGDGDISNFETYPESELDKTPSVSDKDLETFKNF. The span at 337–355 shows a compositional bias: basic and acidic residues; the sequence is ELDKTPSVSDKDLETFKNF.

It belongs to the protein kinase superfamily. AGC Ser/Thr protein kinase family. cAMP subfamily. In terms of assembly, like other cAMP-dependent protein kinases, the inactive holoenzyme is probably composed of 2 PRKX catalytic subunits and a dimer of regulatory subunits. Interacts (cAMP-dependent) specifically with the regulatory subunits PRKAR1A and PRKAR1B. Compared to other cAMP-dependent serine/threonine protein kinases, does not interact with the 2 other PKA regulatory subunits PRKAR2A and PRKAR2B. Interacts with PIN1 (via WW domain). Interacts with cAMP-dependent protein kinase inhibitor/PKI proteins; inhibits PRKX. Interacts with GPKOW. Interacts with SMAD6. Interacts with PKD1; involved in differentiation and controlled morphogenesis of the kidney. Phosphorylated; autophosphorylates in vitro. As to expression, widely expressed.

It is found in the cytoplasm. The protein localises to the nucleus. The catalysed reaction is L-seryl-[protein] + ATP = O-phospho-L-seryl-[protein] + ADP + H(+). It catalyses the reaction L-threonyl-[protein] + ATP = O-phospho-L-threonyl-[protein] + ADP + H(+). Binding of cAMP to the PRKAR1A or PRKAR1B regulatory subunits induces dissociation of the holoenzyme heterotetramer. The released monomeric PRKX is then active and able to phosphorylate its substrates. In terms of biological role, serine/threonine protein kinase regulated by and mediating cAMP signaling in cells. Acts through phosphorylation of downstream targets that may include CREB, SMAD6 and PKD1 and has multiple functions in cellular differentiation and epithelial morphogenesis. Regulates myeloid cell differentiation through SMAD6 phosphorylation. Involved in nephrogenesis by stimulating renal epithelial cell migration and tubulogenesis. Also involved in angiogenesis through stimulation of endothelial cell proliferation, migration and vascular-like structure formation. The chain is cAMP-dependent protein kinase catalytic subunit PRKX (Prkx) from Mus musculus (Mouse).